Here is a 493-residue protein sequence, read N- to C-terminus: GTPase Der (493 aa).

EngA-type G domains lie at 3-166 (PVVA…AEAL) and 206-379 (IKLA…KSAT). GTP is bound by residues 9–16 (GRPNVGKS), 56–60 (DTGGI), 118–121 (NKVD), 212–219 (GRPNVGKS), 259–263 (DTAGV), and 324–327 (NKWD). Positions 380 to 464 (TRVGTSVLTR…PIRIQFQNSE (85 aa)) constitute a KH-like domain.

It belongs to the TRAFAC class TrmE-Era-EngA-EngB-Septin-like GTPase superfamily. EngA (Der) GTPase family. As to quaternary structure, associates with the 50S ribosomal subunit.

Its function is as follows. GTPase that plays an essential role in the late steps of ribosome biogenesis. The polypeptide is GTPase Der (Vibrio atlanticus (strain LGP32) (Vibrio splendidus (strain Mel32))).